We begin with the raw amino-acid sequence, 270 residues long: Formamidopyrimidine-DNA glycosylase (270 aa).

Residue proline 2 is the Schiff-base intermediate with DNA of the active site. The Proton donor role is filled by glutamate 3. Catalysis depends on lysine 58, which acts as the Proton donor; for beta-elimination activity. Positions 91, 110, and 151 each coordinate DNA. Residues 236–270 (FVYGRGGENCKVCGTGLREIKLGQRASVYCPRCQS) form an FPG-type zinc finger. Arginine 260 acts as the Proton donor; for delta-elimination activity in catalysis.

The protein belongs to the FPG family. In terms of assembly, monomer. Zn(2+) serves as cofactor.

It catalyses the reaction Hydrolysis of DNA containing ring-opened 7-methylguanine residues, releasing 2,6-diamino-4-hydroxy-5-(N-methyl)formamidopyrimidine.. The enzyme catalyses 2'-deoxyribonucleotide-(2'-deoxyribose 5'-phosphate)-2'-deoxyribonucleotide-DNA = a 3'-end 2'-deoxyribonucleotide-(2,3-dehydro-2,3-deoxyribose 5'-phosphate)-DNA + a 5'-end 5'-phospho-2'-deoxyribonucleoside-DNA + H(+). In terms of biological role, involved in base excision repair of DNA damaged by oxidation or by mutagenic agents. Acts as a DNA glycosylase that recognizes and removes damaged bases. Has a preference for oxidized purines, such as 7,8-dihydro-8-oxoguanine (8-oxoG). Has AP (apurinic/apyrimidinic) lyase activity and introduces nicks in the DNA strand. Cleaves the DNA backbone by beta-delta elimination to generate a single-strand break at the site of the removed base with both 3'- and 5'-phosphates. The chain is Formamidopyrimidine-DNA glycosylase from Pseudomonas fluorescens (strain ATCC BAA-477 / NRRL B-23932 / Pf-5).